Here is a 170-residue protein sequence, read N- to C-terminus: Calcineurin subunit B type 2 (170 aa).

The N-myristoyl glycine moiety is linked to residue Gly-2. 4 consecutive EF-hand domains span residues 18–46, 50–85, 87–122, and 128–163; these read DEIK…FTSM, QENP…FSVR, DEEQ…MVGD, and QLQQ…LEIH. Residues Asp-63, Asp-65, Asp-67, Gln-69, Glu-74, Asp-100, Asp-102, Asp-104, Tyr-106, and Glu-111 each coordinate Ca(2+). Residues 131–136 form a calcineurin A binding region; the sequence is QLVDKT. Ca(2+) contacts are provided by Asp-141, Asp-143, Asp-145, Lys-147, and Glu-152.

This sequence belongs to the calcineurin regulatory subunit family. In terms of assembly, forms a complex composed of a calmodulin-dependent catalytic subunit (also known as calcineurin A) and a regulatory Ca(2+)-binding subunit (also known as calcineurin B). There are three catalytic subunits, each encoded by a separate gene (PPP3CA, PPP3CB, and PPP3CC) and two regulatory subunits which are also encoded by separate genes (PPP3R1 and PPP3R2). Interacts with SPATA33 (via PQIIIT motif).

The protein localises to the mitochondrion. Regulatory subunit of calcineurin, a calcium-dependent, calmodulin stimulated protein phosphatase. Confers calcium sensitivity. In Bos taurus (Bovine), this protein is Calcineurin subunit B type 2 (PPP3R2).